Reading from the N-terminus, the 776-residue chain is Intermediate filament protein ifp-1 (776 aa).

The interval 1 to 23 is head; sequence MDSANARDCLLHLARAKLSERQD. An IF rod domain is found at 20-371; sequence ERQDLVQLND…ELLDRSGDPR (352 aa). The coil 1A stretch occupies residues 24–55; that stretch reads LVQLNDQFVDIIEHVHYMEAEHTALEHDYNLL. The segment at 56-69 is linker 1; it reads KSGVQSDSSGINEI. The interval 70-207 is coil 1B; that stretch reads YNVEIRTVRS…EDNKKIIMNE (138 aa). The tract at residues 208 to 224 is linker 12; that stretch reads HKYFVRDRNADRHVFRD. Residues 225–620 are coil 2; it reads QLRKAIADIR…QRGPHHSSYH (396 aa). Disordered stretches follow at residues 453–473 and 518–544; these read ASPIRPSYTPYQQESRADSRS and NTTQINNPYASRTPTSSVNDRIASERR. Over residues 518–536 the composition is skewed to polar residues; sequence NTTQINNPYASRTPTSSVN. Residues 621 to 768 are tail; that stretch reads AATGSVSNSI…WFVYTSNTEI (148 aa). The 112-residue stretch at 653-764 folds into the LTD domain; it reads NFQRFTRWYK…EVKSWFVYTS (112 aa).

It belongs to the intermediate filament family.

Its subcellular location is the cytoplasm. Cytoplasmic intermediate filaments provide mechanical strength to cells. Not essential protein. The sequence is that of Intermediate filament protein ifp-1 (ifp-1) from Caenorhabditis elegans.